We begin with the raw amino-acid sequence, 290 residues long: Chitinase 10 (290 aa).

The signal sequence occupies residues methionine 1–glycine 28. 2 disulfides stabilise this stretch: cysteine 70/cysteine 132 and cysteine 144/cysteine 153. The Proton donor role is filled by glutamate 114. Asparagine 193 and asparagine 234 each carry an N-linked (GlcNAc...) asparagine glycan. The cysteines at positions 252 and 284 are disulfide-linked.

This sequence belongs to the glycosyl hydrolase 19 family. Chitinase class I subfamily. In terms of tissue distribution, expressed at low levels in roots, leaves and meristems.

It catalyses the reaction Random endo-hydrolysis of N-acetyl-beta-D-glucosaminide (1-&gt;4)-beta-linkages in chitin and chitodextrins.. The sequence is that of Chitinase 10 (Cht10) from Oryza sativa subsp. japonica (Rice).